The chain runs to 480 residues: Na(+)/H(+) antiporter NhaA (480 aa).

11 helical membrane passes run 34–54, 76–96, 113–133, 144–164, 174–194, 197–217, 223–243, 282–302, 312–332, 350–370, and 381–401; these read VGGV…NIPA, LSVA…VAGI, AVLP…VYTL, GWAV…AVIG, FLLT…AIFF, RINF…WLLL, GWYV…NSGV, GLAV…GGAL, LGVV…STWL, IFAV…IGEL, and EVKA…TVLL. The tract at residues 454–480 is disordered; sequence AAEKAAAARHGGAEVPGGAGEEDGRPA.

It belongs to the NhaA Na(+)/H(+) (TC 2.A.33) antiporter family.

The protein resides in the cell membrane. It carries out the reaction Na(+)(in) + 2 H(+)(out) = Na(+)(out) + 2 H(+)(in). Functionally, na(+)/H(+) antiporter that extrudes sodium in exchange for external protons. This chain is Na(+)/H(+) antiporter NhaA, found in Streptomyces antibioticus.